The chain runs to 367 residues: C-glycoside deglycosidase alpha subunit (367 aa).

Glu-146 contributes to the Mg(2+) binding site. The active-site Proton acceptor is the His-148. Mg(2+) is bound by residues Asp-178, His-276, and Glu-312.

This sequence belongs to the C-glycoside deglycosidase alpha subunit family. As to quaternary structure, heterodimer composed of an alpha subunit (CarB1) and a beta subunit (CarC1). Mg(2+) is required as a cofactor.

It catalyses the reaction 3''-dehydroisovitexin = 1,5-anhydro-D-erythro-hex-1-en-3-ulose + apigenin. With respect to regulation, activity is strongly reduced in the presence of chelating agents. Functionally, carbon-carbon bond-cleaving enzyme which participates in the metabolism of C-glycosides. Acts on the C6-glycosylated compound 3''-dehydroisovitexin (3''-oxo-isovitexin). Shows weak activity with 3''-dehydroisoorientin (3''-oxo-homoorientin) and 3'-dehydromangiferin (3'-oxo-mangiferin). The sequence is that of C-glycoside deglycosidase alpha subunit from Arthrobacter globiformis (strain ATCC 8010 / DSM 20124 / JCM 1332 / NBRC 12137 / NCIMB 8907 / NRRL B-2979 / 168).